The following is a 398-amino-acid chain: Histidinol-phosphate aminotransferase (398 aa).

Over residues 1 to 10 (MTGQRATPQP) the composition is skewed to polar residues. The interval 1-30 (MTGQRATPQPTLDDLPLRDDLRGKSPYGAP) is disordered. Lys-234 carries the N6-(pyridoxal phosphate)lysine modification.

Belongs to the class-II pyridoxal-phosphate-dependent aminotransferase family. Histidinol-phosphate aminotransferase subfamily. In terms of assembly, homodimer. It depends on pyridoxal 5'-phosphate as a cofactor.

It catalyses the reaction L-histidinol phosphate + 2-oxoglutarate = 3-(imidazol-4-yl)-2-oxopropyl phosphate + L-glutamate. Its pathway is amino-acid biosynthesis; L-histidine biosynthesis; L-histidine from 5-phospho-alpha-D-ribose 1-diphosphate: step 7/9. In Mycolicibacterium paratuberculosis (strain ATCC BAA-968 / K-10) (Mycobacterium paratuberculosis), this protein is Histidinol-phosphate aminotransferase.